The sequence spans 391 residues: Aspartic protease 17 (391 aa).

The signal sequence occupies residues 1–15; that stretch reads MHLIFLLFLAPFCSA. The Peptidase A1 domain maps to 65 to 385; the sequence is YLGNFTVGTP…DIGNARIGFA (321 aa). Asparagine 68 carries N-linked (GlcNAc...) asparagine glycosylation. Aspartate 83 is a catalytic residue. Residue asparagine 108 is glycosylated (N-linked (GlcNAc...) asparagine). Residue aspartate 274 is part of the active site. A disulfide bridge connects residues cysteine 309 and cysteine 345.

This sequence belongs to the peptidase A1 family. Expressed in intestinal cells.

It is found in the secreted. Functionally, aspartic proteinase. The chain is Aspartic protease 17 from Caenorhabditis elegans.